Consider the following 205-residue polypeptide: Probable GTP-binding protein EngB (205 aa).

An EngB-type G domain is found at 29–203; sequence QGAEIAFIGR…KAVLSQWFRS (175 aa). Residues 37–44, 64–68, 82–85, 149–152, and 182–184 contribute to the GTP site; these read GRSNAGKS, GRTQM, DLPG, TKSD, and FSS. Residues serine 44 and threonine 66 each contribute to the Mg(2+) site.

It belongs to the TRAFAC class TrmE-Era-EngA-EngB-Septin-like GTPase superfamily. EngB GTPase family. Mg(2+) is required as a cofactor.

Its function is as follows. Necessary for normal cell division and for the maintenance of normal septation. The sequence is that of Probable GTP-binding protein EngB from Coxiella burnetii (strain RSA 493 / Nine Mile phase I).